The following is a 250-amino-acid chain: 5-oxoprolinase subunit A (250 aa).

It belongs to the LamB/PxpA family. In terms of assembly, forms a complex composed of PxpA, PxpB and PxpC.

The enzyme catalyses 5-oxo-L-proline + ATP + 2 H2O = L-glutamate + ADP + phosphate + H(+). Functionally, catalyzes the cleavage of 5-oxoproline to form L-glutamate coupled to the hydrolysis of ATP to ADP and inorganic phosphate. This is 5-oxoprolinase subunit A from Thermus thermophilus (strain ATCC 27634 / DSM 579 / HB8).